Consider the following 520-residue polypeptide: Cytochrome P450 monooxygenase btcC (520 aa).

Residues isoleucine 2–isoleucine 22 form a helical membrane-spanning segment. Asparagine 177 is a glycosylation site (N-linked (GlcNAc...) asparagine). Cysteine 448 is a heme binding site. Asparagine 511 is a glycosylation site (N-linked (GlcNAc...) asparagine).

This sequence belongs to the cytochrome P450 family. Heme serves as cofactor.

It is found in the membrane. The protein operates within secondary metabolite biosynthesis; terpenoid biosynthesis. Cytochrome P4590 monooxygenase part of the gene cluster that mediates the biosynthesis of betaestacins. The bifunctional terpene synthase btcA converts isopentenyl diphosphate (IPP) and dimethylallyl diphosphate (DMAPP) into the sesterterpene betaestacin I. The C-terminal prenyltransferase (PT) domain of btcA catalyzes formation of GFPP, whereas the N-terminal terpene cyclase (TC) domain catalyzes the cyclization of GFPP into betaestacin I. The cytochrome P450 monooxygenase btcB oxidizes the C25 methyl group of betaestacin I to yield the carboxylic acid betaestacin IV via the alcohol betaestacin III. The cytochrome P450 monooxygenase btcC further catalyzes the multistep oxidation of betaestacin IV to produce several compounds, including betaestacins Va, Vb, Vc and VI. The chain is Cytochrome P450 monooxygenase btcC from Colletotrichum orbiculare (strain 104-T / ATCC 96160 / CBS 514.97 / LARS 414 / MAFF 240422) (Cucumber anthracnose fungus).